The chain runs to 145 residues: Ribonuclease HI (145 aa).

The 142-residue stretch at 1–142 (MNQTVYLYTD…ADDLANRGAA (142 aa)) folds into the RNase H type-1 domain. Mg(2+) contacts are provided by Asp10, Glu48, Asp70, and Asp134.

The protein belongs to the RNase H family. In terms of assembly, monomer. Mg(2+) serves as cofactor.

The protein resides in the cytoplasm. The enzyme catalyses Endonucleolytic cleavage to 5'-phosphomonoester.. Its function is as follows. Endonuclease that specifically degrades the RNA of RNA-DNA hybrids. The sequence is that of Ribonuclease HI from Neisseria meningitidis serogroup A / serotype 4A (strain DSM 15465 / Z2491).